The chain runs to 205 residues: Large ribosomal subunit protein uL3 (205 aa).

Belongs to the universal ribosomal protein uL3 family. Part of the 50S ribosomal subunit. Forms a cluster with proteins L14 and L19.

In terms of biological role, one of the primary rRNA binding proteins, it binds directly near the 3'-end of the 23S rRNA, where it nucleates assembly of the 50S subunit. The polypeptide is Large ribosomal subunit protein uL3 (Bacteroides fragilis (strain ATCC 25285 / DSM 2151 / CCUG 4856 / JCM 11019 / LMG 10263 / NCTC 9343 / Onslow / VPI 2553 / EN-2)).